A 319-amino-acid chain; its full sequence is Pantothenate kinase (319 aa).

Residue 96 to 103 (GSVAVGKS) participates in ATP binding.

This sequence belongs to the prokaryotic pantothenate kinase family.

It is found in the cytoplasm. The enzyme catalyses (R)-pantothenate + ATP = (R)-4'-phosphopantothenate + ADP + H(+). Its pathway is cofactor biosynthesis; coenzyme A biosynthesis; CoA from (R)-pantothenate: step 1/5. This is Pantothenate kinase from Bacillus velezensis (strain DSM 23117 / BGSC 10A6 / LMG 26770 / FZB42) (Bacillus amyloliquefaciens subsp. plantarum).